The chain runs to 456 residues: N(6)-adenosine-methyltransferase non-catalytic subunit METTL14 (456 aa).

Residues 50–75 (TCRASYDTSAPNAKRKYLDEGETDED) form a disordered region. Interaction with METTL3 regions lie at residues 135 to 136 (RD) and 237 to 238 (SG). The segment at 245 to 254 (RVCLRKWGYR) is positively charged region required for RNA-binding. 2 interaction with METTL3 regions span residues 255-258 (RCED) and 278-287 (KAVFQRTKEH). Residues 297-298 (KR) are positively charged region required for RNA-binding. Positions 308–312 (NVDID) are interaction with METTL3. A disordered region spans residues 393–456 (ERLRPKSPPP…GAHRGGFPPR (64 aa)). S399 is subject to Phosphoserine. Gly residues predominate over residues 409–423 (GGGAPRGGGRGGTSA). Residues 425–440 (RGRERNRSNFRGERGG) show a composition bias toward basic and acidic residues. The segment covering 441–450 (FRGGRGGAHR) has biased composition (gly residues).

It belongs to the MT-A70-like family. As to quaternary structure, heterodimer; heterodimerizes with METTL3 to form an antiparallel heterodimer that constitutes an active methyltransferase. Component of the WMM complex, a N6-methyltransferase complex composed of a catalytic subcomplex, named MAC, and of an associated subcomplex, named MACOM. The MAC subcomplex is composed of METTL3 and METTL14. The MACOM subcomplex is composed of WTAP, ZC3H13, CBLL1/HAKAI, VIRMA, and, in some cases of RBM15 (RBM15 or RBM15B).

The protein localises to the nucleus. Its function is as follows. The METTL3-METTL14 heterodimer forms a N6-methyltransferase complex that methylates adenosine residues at the N(6) position of some mRNAs and regulates the circadian clock, differentiation of embryonic stem cells and cortical neurogenesis. In the heterodimer formed with METTL3, METTL14 constitutes the RNA-binding scaffold that recognizes the substrate rather than the catalytic core. N6-methyladenosine (m6A), which takes place at the 5'-[AG]GAC-3' consensus sites of some mRNAs, plays a role in mRNA stability and processing. M6A acts as a key regulator of mRNA stability by promoting mRNA destabilization and degradation. In embryonic stem cells (ESCs), m6A methylation of mRNAs encoding key naive pluripotency-promoting transcripts results in transcript destabilization. M6A regulates spermatogonial differentiation and meiosis and is essential for male fertility and spermatogenesis. M6A also regulates cortical neurogenesis: m6A methylation of transcripts related to transcription factors, neural stem cells, the cell cycle and neuronal differentiation during brain development promotes their destabilization and decay, promoting differentiation of radial glial cells. The protein is N(6)-adenosine-methyltransferase non-catalytic subunit METTL14 of Homo sapiens (Human).